The primary structure comprises 198 residues: RNA-free ribonuclease P (198 aa).

It belongs to the HARP family.

The catalysed reaction is Endonucleolytic cleavage of RNA, removing 5'-extranucleotides from tRNA precursor.. In terms of biological role, RNA-free RNase P that catalyzes the removal of the 5'-leader sequence from pre-tRNA to produce the mature 5'-terminus. In Thermococcus kodakarensis (strain ATCC BAA-918 / JCM 12380 / KOD1) (Pyrococcus kodakaraensis (strain KOD1)), this protein is RNA-free ribonuclease P.